The primary structure comprises 439 residues: Apolipoprotein N-acyltransferase (439 aa).

The next 6 helical transmembrane spans lie at 13-33 (LLAGILFYLSFSKLNLYFLVF), 47-67 (LFSFGFSAFFLSLLWIRIPLI), 75-95 (FIAYPALVLLVLFLSLYQFGL), 97-117 (YLLWRVFKFSFFAFPFLYTLV), 149-169 (NAGTVFLGSFVVLLISLFPLF), and 175-195 (IFSLAIITPLLIYGFIKETSY). The CN hydrolase domain maps to 207 to 439 (IQPFVPQDVK…GSRGILLFSF (233 aa)). The Proton acceptor role is filled by E248. K305 is an active-site residue. C355 serves as the catalytic Nucleophile.

Belongs to the CN hydrolase family. Apolipoprotein N-acyltransferase subfamily.

The protein resides in the cell inner membrane. It carries out the reaction N-terminal S-1,2-diacyl-sn-glyceryl-L-cysteinyl-[lipoprotein] + a glycerophospholipid = N-acyl-S-1,2-diacyl-sn-glyceryl-L-cysteinyl-[lipoprotein] + a 2-acyl-sn-glycero-3-phospholipid + H(+). Its pathway is protein modification; lipoprotein biosynthesis (N-acyl transfer). Its function is as follows. Catalyzes the phospholipid dependent N-acylation of the N-terminal cysteine of apolipoprotein, the last step in lipoprotein maturation. The chain is Apolipoprotein N-acyltransferase from Aquifex aeolicus (strain VF5).